Reading from the N-terminus, the 176-residue chain is WASH complex subunit 3 (176 aa).

Positions 47–74 (ETKFVEMERQLQKTEAALIILEAKLASI) form a coiled coil. Disordered regions lie at residues 84–123 (ATEAPAISNQQRNEEASMVDTTEPPTTENPTEPELPPESV) and 152–176 (KMQSEGLEPRILDTPDLILADGQRE). Residues 104–115 (TTEPPTTENPTE) show a composition bias toward low complexity.

The protein belongs to the CCDC53 family. As to quaternary structure, component of the WASH complex.

The protein localises to the early endosome. Acts at least in part as component of the WASH complex which may regulate wash nucleation-promoting factor (NPF) activity and is required for its membrane targeting during endosomal sorting. During embryogenesis, not involved in the wash-dependent developmental migration of hemocytes anteriorly from the tail. The sequence is that of WASH complex subunit 3 from Drosophila melanogaster (Fruit fly).